A 512-amino-acid chain; its full sequence is 2-isopropylmalate synthase (512 aa).

Positions 5–268 (LIIFDTTLRD…DVDIETQHIL (264 aa)) constitute a Pyruvate carboxyltransferase domain. Asp14, His202, His204, and Asn239 together coordinate Mn(2+). Positions 394–512 (SFVSLSQHSE…SKADRVAAQG (119 aa)) are regulatory domain.

Belongs to the alpha-IPM synthase/homocitrate synthase family. LeuA type 1 subfamily. In terms of assembly, homodimer. Mn(2+) is required as a cofactor.

Its subcellular location is the cytoplasm. It catalyses the reaction 3-methyl-2-oxobutanoate + acetyl-CoA + H2O = (2S)-2-isopropylmalate + CoA + H(+). The protein operates within amino-acid biosynthesis; L-leucine biosynthesis; L-leucine from 3-methyl-2-oxobutanoate: step 1/4. Catalyzes the condensation of the acetyl group of acetyl-CoA with 3-methyl-2-oxobutanoate (2-ketoisovalerate) to form 3-carboxy-3-hydroxy-4-methylpentanoate (2-isopropylmalate). In Albidiferax ferrireducens (strain ATCC BAA-621 / DSM 15236 / T118) (Rhodoferax ferrireducens), this protein is 2-isopropylmalate synthase.